We begin with the raw amino-acid sequence, 239 residues long: uncharacterized protein (239 aa).

An N-terminal signal peptide occupies residues 1-19 (MPLLHRTIIFLQLLGTISS). N-linked (GlcNAc...) asparagine glycans are attached at residues Asn-44, Asn-58, Asn-72, Asn-92, Asn-109, Asn-136, Asn-172, Asn-192, and Asn-213.

It is found in the secreted. This is an uncharacterized protein from Caenorhabditis elegans.